Consider the following 108-residue polypeptide: Large ribosomal subunit protein bL21c (108 aa).

It belongs to the bacterial ribosomal protein bL21 family. Part of the 50S ribosomal subunit.

The protein resides in the plastid. It localises to the chloroplast. Its function is as follows. This protein binds to 23S rRNA. The chain is Large ribosomal subunit protein bL21c from Cyanidium caldarium (Red alga).